We begin with the raw amino-acid sequence, 225 residues long: tRNA (guanine-N(1)-)-methyltransferase (225 aa).

Residues Gly-110 and 130 to 135 (VGDYVL) contribute to the S-adenosyl-L-methionine site.

Belongs to the RNA methyltransferase TrmD family. In terms of assembly, homodimer.

It is found in the cytoplasm. It carries out the reaction guanosine(37) in tRNA + S-adenosyl-L-methionine = N(1)-methylguanosine(37) in tRNA + S-adenosyl-L-homocysteine + H(+). Specifically methylates guanosine-37 in various tRNAs. The sequence is that of tRNA (guanine-N(1)-)-methyltransferase from Neorickettsia sennetsu (strain ATCC VR-367 / Miyayama) (Ehrlichia sennetsu).